Consider the following 842-residue polypeptide: MNKITKYIDALPLSDAEKSALPDTSLQAVHQALDDDHQTFAREDDSPLGSVKARLAHSWPDSLSGDQLVKDDEGRTQLHAMPKAKRSSMIPDPWRTNPVGRFWDRLRGRDVTPRYLSRLTQEERESEQKWRTVGTIRRYILLLLTLSQTVVATWYMKTILPYQGWALINPADMVGQNLWISFMQLLPYVLQSGILILFAVLFCWVSAGFWTALMGFLQLLIGRDKYSISASTVGDEPLNPAHRTALIMPICNEDVDRVFAGLRATWESVKATGNAAHFDVYILSDSYNPDICVAEQKAWMELIAEVQGEGQIFYRRRRRRVKRKSGNIDDFCRRWGSQYSYMVVLDADSVMTGECLSSLVRLMEANPNAGIIQSSPRASGMDTLYARCQQFATRVYGPLFTAGLHFWQLGESHYWGHNAIIRVKPFIEHCALAPLPGEGNFAGSILSHDFVEAALMRRAGWGVWIAYDLPGSYEELPPNLLDELKRDRRWCQGNLMNFRLFLVRGMHPVHRAVFLTGVMSYLSAPLWFMFLALSTALQVVHALTEPQYFLQPRQLFPVWPQWRPELAIALFASTMVLLFLPKLLSIILVWCKGPKEYGGFFRVTLSLLLEVLFSVLLAPVRMLFHTVFVVSAFLGWEVVWNSPQRDDDSTPWGEAFMRHGSQLLLGLVWAVGMAWLDLRFLFWLAPIVVSLILSPFVSAISSRATVGLRTKRWKLFLIPEEYSPPQVLKDTDAYLTMNRQRSLDDGFMHAVFNPSFNALATAMATARHRQGHILEIARERHVEQALNETPDKLNRDRRLVLLSDPVTMSRLHYRVWAAPEKYSSWVNAYQQLALNPLALKTK.

The next 7 membrane-spanning stretches (helical) occupy residues 140-160 (ILLLLTLSQTVVATWYMKTIL), 194-214 (ILILFAVLFCWVSAGFWTALM), 513-533 (VFLTGVMSYLSAPLWFMFLAL), 568-588 (IALFASTMVLLFLPKLLSIIL), 615-635 (VLLAPVRMLFHTVFVVSAFLG), 656-676 (FMRHGSQLLLGLVWAVGMAWL), and 680-700 (FLFWLAPIVVSLILSPFVSAI).

The protein belongs to the glycosyltransferase 2 family. OpgH subfamily.

It is found in the cell inner membrane. The protein operates within glycan metabolism; osmoregulated periplasmic glucan (OPG) biosynthesis. Its function is as follows. Involved in the biosynthesis of osmoregulated periplasmic glucans (OPGs). The polypeptide is Glucans biosynthesis glucosyltransferase H (Klebsiella pneumoniae subsp. pneumoniae (strain ATCC 700721 / MGH 78578)).